We begin with the raw amino-acid sequence, 205 residues long: SREBP regulating gene protein (205 aa).

Topologically, residues M1–R16 are cytoplasmic. A helical transmembrane segment spans residues W17–F35. Residues K36 to A205 lie on the Lumenal side of the membrane. N67 is a glycosylation site (N-linked (GlcNAc...) asparagine).

It belongs to the SPRING family. Interacts with SCAP.

The protein localises to the golgi apparatus membrane. Its function is as follows. Positively regulates hepatic SREBP signaling pathway by modulating the proper localization of SCAP (SREBP cleavage-activating protein) to the endoplasmic reticulum, thereby controlling the level of functional SCAP. This Homo sapiens (Human) protein is SREBP regulating gene protein.